The following is a 979-amino-acid chain: Putative transcription initiation factor TFIID 111 kDa subunit (979 aa).

S244 carries the phosphoserine modification.

In terms of assembly, TFIID is composed of TATA binding protein (TBP) and a number of TBP-associated factors (TAFs).

The protein resides in the nucleus. Its function is as follows. TAFs are components of the transcription factor IID (TFIID) complex that are essential for mediating regulation of RNA polymerase transcription. The protein is Putative transcription initiation factor TFIID 111 kDa subunit of Schizosaccharomyces pombe (strain 972 / ATCC 24843) (Fission yeast).